The chain runs to 338 residues: 4-hydroxythreonine-4-phosphate dehydrogenase (338 aa).

The substrate site is built by H139 and T140. A divalent metal cation contacts are provided by H169, H214, and H270. Positions 278, 287, and 296 each coordinate substrate.

The protein belongs to the PdxA family. In terms of assembly, homodimer. It depends on Zn(2+) as a cofactor. Mg(2+) is required as a cofactor. Co(2+) serves as cofactor.

It is found in the cytoplasm. The catalysed reaction is 4-(phosphooxy)-L-threonine + NAD(+) = 3-amino-2-oxopropyl phosphate + CO2 + NADH. It participates in cofactor biosynthesis; pyridoxine 5'-phosphate biosynthesis; pyridoxine 5'-phosphate from D-erythrose 4-phosphate: step 4/5. Catalyzes the NAD(P)-dependent oxidation of 4-(phosphooxy)-L-threonine (HTP) into 2-amino-3-oxo-4-(phosphooxy)butyric acid which spontaneously decarboxylates to form 3-amino-2-oxopropyl phosphate (AHAP). The polypeptide is 4-hydroxythreonine-4-phosphate dehydrogenase (Desulfosudis oleivorans (strain DSM 6200 / JCM 39069 / Hxd3) (Desulfococcus oleovorans)).